Here is a 211-residue protein sequence, read N- to C-terminus: MAKGIIGKKLGMTQIFDDDGNVIPVTVVQAGPCVVIQKKVEERDGYNALQVGFEDVPEHRVNKPLKGHFERAGVKPKKHVKEFMDFPEDLNEGDEITVDIFEEGELVDVTGISKGKGFAGTIKRWNFSRGPMSHGSRFHRAPGSIGAVDASRVFKGQKLPGRMGHDRVTIQNLEVVRVDSEKNLLLIKGSVPGPNKGILTIREAVKKASNA.

The protein belongs to the universal ribosomal protein uL3 family. In terms of assembly, part of the 50S ribosomal subunit. Forms a cluster with proteins L14 and L19.

Its function is as follows. One of the primary rRNA binding proteins, it binds directly near the 3'-end of the 23S rRNA, where it nucleates assembly of the 50S subunit. In Halothermothrix orenii (strain H 168 / OCM 544 / DSM 9562), this protein is Large ribosomal subunit protein uL3.